A 990-amino-acid polypeptide reads, in one-letter code: Serine/threonine-protein phosphatase 6 regulatory ankyrin repeat subunit B (990 aa).

28 ANK repeats span residues 7–36 (ADQP…DVNA), 40–69 (EKRT…RVNA), 73–102 (MWLT…DVNA), 106–135 (NWQT…SVNV), 139–168 (GGRT…NINA), 172–201 (KDRR…EVTC), 205–234 (KGYT…EIDE), 238–267 (YGNT…NVNQ), 271–301 (NGFT…DVNI), 305–334 (DGKS…EIDC), 338–367 (DGNT…DTAK), 371–400 (HNMF…EIDT), 404–433 (FGRT…DFNK), 437–466 (RGRT…NINE), 470–499 (WGRT…NAEE), 531–560 (EGYN…NMFE), 566–595 (ATKS…DLDI), 599–628 (KGRT…SVTV), 633–662 (TKRT…NPDV), 666–695 (KGQT…SVDA), 699–728 (LGCT…SILC), 732–761 (RGRT…SEED), 768–797 (QGYT…FRKF), 800–829 (NSFS…ASIV), 835–864 (KGRT…QVNA), 868–898 (AGKT…DLTL), 902–931 (DSNT…EQSL), and 938–967 (SLQT…CVLA).

Protein phosphatase 6 (PP6) holoenzyme is proposed to be a heterotrimeric complex formed by the catalytic subunit, a SAPS domain-containing subunit (PP6R) and an ankyrin repeat-domain containing regulatory subunit (ARS).

In terms of biological role, putative regulatory subunit of protein phosphatase 6 (PP6) that may be involved in the recognition of phosphoprotein substrates. This is Serine/threonine-protein phosphatase 6 regulatory ankyrin repeat subunit B (ANKRD44) from Gallus gallus (Chicken).